The primary structure comprises 268 residues: Lectin ESA-2 (268 aa).

4 repeat units span residues 1–67, 68–135, 136–202, and 203–268. The tract at residues 1–268 is 4 X approximate tandem repeats; it reads GRYTVQNQWG…PIGFKGVATS (268 aa).

In terms of assembly, monomer.

Functionally, lectin specific for high mannose N-glycans, recognizes the branched moiety of these glycans. Does not recognize other types of N-glycans or monosaccharides. Agglutinates trypsin-treated sheep and rabbit erythrocytes and untreated sheep erythrocytes. Has mitogenic activity on mouse lymphocytes. Does not require metal ions for activity. This is Lectin ESA-2 from Eucheuma serra (Marine red alga).